A 448-amino-acid polypeptide reads, in one-letter code: Guanine deaminase (448 aa).

Residues His74 and His76 each coordinate Zn(2+). Substrate-binding positions include 76 to 79, 204 to 205, 231 to 234, and Asp319; these read HAPQ, RF, and HISE. Positions 231 and 319 each coordinate Zn(2+).

This sequence belongs to the metallo-dependent hydrolases superfamily. ATZ/TRZ family. The cofactor is Zn(2+).

It carries out the reaction guanine + H2O + H(+) = xanthine + NH4(+). The protein operates within purine metabolism; guanine degradation; xanthine from guanine: step 1/1. Its activity is regulated as follows. Strongly inhibited by p-chloromercuribenzoate (PCMB). Potassium cyanide (KCN) strongly inhibits activity towards 7,8-dihydropterin but has almost no effect on activity towards guanine. Pterin inhibits activity towards guanine but has little effect on activity towards 7,8-dihydropterin. Functionally, catalyzes the hydrolytic deamination of guanine, producing xanthine and ammonia. Also has 7,8-dihydropterin deaminase activity, which plays a role in synthesis of the red eye pigment aurodrosopterin. This chain is Guanine deaminase, found in Drosophila melanogaster (Fruit fly).